Reading from the N-terminus, the 78-residue chain is Large ribosomal subunit protein bL28 (78 aa).

The disordered stretch occupies residues 1 to 21 (MSRVCQVTGKRPVSGNNRSHA).

The protein belongs to the bacterial ribosomal protein bL28 family.

This Yersinia enterocolitica serotype O:8 / biotype 1B (strain NCTC 13174 / 8081) protein is Large ribosomal subunit protein bL28.